The following is a 376-amino-acid chain: Putative aryl-alcohol dehydrogenase AAD14 (376 aa).

Catalysis depends on Tyr76, which acts as the Proton donor. His151 provides a ligand contact to substrate. Residue 236-246 (DVMGGGRFQSK) participates in NADP(+) binding.

The protein belongs to the aldo/keto reductase family. Aldo/keto reductase 2 subfamily.

The protein is Putative aryl-alcohol dehydrogenase AAD14 (AAD14) of Saccharomyces cerevisiae (strain ATCC 204508 / S288c) (Baker's yeast).